Here is a 245-residue protein sequence, read N- to C-terminus: tRNA (guanine-N(1)-)-methyltransferase (245 aa).

S-adenosyl-L-methionine-binding positions include Gly113 and 133–138 (IGDYVL).

This sequence belongs to the RNA methyltransferase TrmD family. Homodimer.

The protein resides in the cytoplasm. The catalysed reaction is guanosine(37) in tRNA + S-adenosyl-L-methionine = N(1)-methylguanosine(37) in tRNA + S-adenosyl-L-homocysteine + H(+). Its function is as follows. Specifically methylates guanosine-37 in various tRNAs. The chain is tRNA (guanine-N(1)-)-methyltransferase from Oceanobacillus iheyensis (strain DSM 14371 / CIP 107618 / JCM 11309 / KCTC 3954 / HTE831).